Here is a 216-residue protein sequence, read N- to C-terminus: Adenylate kinase (216 aa).

10-15 (GAGKGT) contacts ATP. The interval 30 to 59 (STGDMLRAAVKAGTPLGLELKKVMDAGQLV) is NMP. Residues T31, R36, 57 to 59 (QLV), 85 to 88 (GFPR), and Q92 contribute to the AMP site. An LID region spans residues 122 to 159 (GRRVHLASGRTYHIQYNPPKVEGKDDVTGEDLIQRDDD). Residues R123 and 132-133 (TY) each bind ATP. AMP-binding residues include R156 and R167. Residue G202 coordinates ATP.

This sequence belongs to the adenylate kinase family. In terms of assembly, monomer.

It is found in the cytoplasm. It carries out the reaction AMP + ATP = 2 ADP. The protein operates within purine metabolism; AMP biosynthesis via salvage pathway; AMP from ADP: step 1/1. In terms of biological role, catalyzes the reversible transfer of the terminal phosphate group between ATP and AMP. Plays an important role in cellular energy homeostasis and in adenine nucleotide metabolism. The chain is Adenylate kinase from Pseudomonas putida (strain GB-1).